Here is a 197-residue protein sequence, read N- to C-terminus: Mediator of RNA polymerase II transcription subunit 21 (197 aa).

The tract at residues 37 to 112 is disordered; the sequence is PPPSVPSAVP…APPRPDSPNT (76 aa). 2 stretches are compositionally biased toward low complexity: residues 60–70 and 90–100; these read PTSGTATNTPG and PQMQQQHQEQP. Positions 140–183 form a coiled coil; the sequence is GIKSSEAEQQERIKQLAEELRVVEEERSARRRELRRLGEKVDGL.

It belongs to the Mediator complex subunit 21 family. In terms of assembly, component of the Mediator complex.

It localises to the nucleus. Its function is as follows. Component of the Mediator complex, a coactivator involved in the regulated transcription of nearly all RNA polymerase II-dependent genes. Mediator functions as a bridge to convey information from gene-specific regulatory proteins to the basal RNA polymerase II transcription machinery. Mediator is recruited to promoters by direct interactions with regulatory proteins and serves as a scaffold for the assembly of a functional preinitiation complex with RNA polymerase II and the general transcription factors. The sequence is that of Mediator of RNA polymerase II transcription subunit 21 (SRB7) from Coccidioides immitis (strain RS) (Valley fever fungus).